The primary structure comprises 1025 residues: Synapsin (1025 aa).

Disordered regions lie at residues 1–94 (MKRG…SRES), 439–784 (VCRP…NYGS), 872–910 (YDSN…KHSD), and 995–1025 (DFSD…LDLK). Residues 34-52 (TKPPVAGGPPNMPPPPAPG) show a composition bias toward pro residues. The segment covering 454-463 (SRSSVSSRAE) has biased composition (low complexity). Over residues 472–492 (PTPPLPAGPRPAPMGGPPPIP) the composition is skewed to pro residues. Low complexity-rich tracts occupy residues 499-546 (VGSI…SSVS) and 594-626 (SETS…QFSF). Ser-539 carries the post-translational modification Phosphoserine. The span at 651–673 (TTASSAVRPESSVSVSDSRNTDT) shows a compositional bias: polar residues. The span at 690-702 (QQERVNPFDKEPS) shows a compositional bias: basic and acidic residues. Over residues 703–725 (KSGSAASIHTSSSSSISSSSISS) the composition is skewed to low complexity. The segment covering 726–735 (RINRNGNAIQ) has biased composition (polar residues). The span at 736–749 (SPPPPAGPPPPPPT) shows a compositional bias: pro residues. Positions 750–759 (NVTAVGSNAN) are enriched in polar residues. A compositionally biased stretch (low complexity) spans 760-772 (SSSGYRNSFSSSL). Over residues 872–904 (YDSNSIASQGEGLNNPSDLPSYTRPSYSRSESN) the composition is skewed to polar residues. Low complexity predominate over residues 995-1007 (DFSDSGSMSSIGS).

This sequence belongs to the synapsin family. As to quaternary structure, identified in a complex with Syt1 and nwk. As to expression, widely expressed in the embryonic and adult nervous system synaptic terminals.

It localises to the synapse. Plays a significant role in nervous system function, which is subtle at the cellular level but manifests itself in complex behavior. In Drosophila melanogaster (Fruit fly), this protein is Synapsin (Syn).